The following is an 84-amino-acid chain: METVITATIIGASILLAFAALGTAIGFAILGGKFLESSARQPELASSLQTKMFIVAGLLDAIAMIAVGISLLFIFANPFIGLLN.

The next 2 membrane-spanning stretches (helical) occupy residues 9–29 (IIGA…GFAI) and 54–74 (IVAG…LLFI).

This sequence belongs to the ATPase C chain family. In terms of assembly, F-type ATPases have 2 components, F(1) - the catalytic core - and F(0) - the membrane proton channel. F(1) has five subunits: alpha(3), beta(3), gamma(1), delta(1), epsilon(1). F(0) has three main subunits: a(1), b(2) and c(10-14). The alpha and beta chains form an alternating ring which encloses part of the gamma chain. F(1) is attached to F(0) by a central stalk formed by the gamma and epsilon chains, while a peripheral stalk is formed by the delta and b chains.

The protein localises to the cell inner membrane. Its function is as follows. F(1)F(0) ATP synthase produces ATP from ADP in the presence of a proton or sodium gradient. F-type ATPases consist of two structural domains, F(1) containing the extramembraneous catalytic core and F(0) containing the membrane proton channel, linked together by a central stalk and a peripheral stalk. During catalysis, ATP synthesis in the catalytic domain of F(1) is coupled via a rotary mechanism of the central stalk subunits to proton translocation. Key component of the F(0) channel; it plays a direct role in translocation across the membrane. A homomeric c-ring of between 10-14 subunits forms the central stalk rotor element with the F(1) delta and epsilon subunits. The polypeptide is ATP synthase subunit c (Haemophilus influenzae (strain ATCC 51907 / DSM 11121 / KW20 / Rd)).